The sequence spans 483 residues: Acetyl-coenzyme A carboxylase carboxyl transferase subunit beta, chloroplastic (483 aa).

Residues 221–483 form the CoA carboxyltransferase N-terminal domain; it reads LWVQCENCYG…FQFHGFFPRP (263 aa). Zn(2+)-binding residues include C225, C228, C244, and C247. The C4-type zinc finger occupies 225–247; it reads CENCYGLNYKKFFSSKMNICEQC.

Belongs to the AccD/PCCB family. As to quaternary structure, acetyl-CoA carboxylase is a heterohexamer composed of biotin carboxyl carrier protein, biotin carboxylase and 2 subunits each of ACCase subunit alpha and ACCase plastid-coded subunit beta (accD). Requires Zn(2+) as cofactor.

Its subcellular location is the plastid. The protein localises to the chloroplast stroma. It catalyses the reaction N(6)-carboxybiotinyl-L-lysyl-[protein] + acetyl-CoA = N(6)-biotinyl-L-lysyl-[protein] + malonyl-CoA. It functions in the pathway lipid metabolism; malonyl-CoA biosynthesis; malonyl-CoA from acetyl-CoA: step 1/1. In terms of biological role, component of the acetyl coenzyme A carboxylase (ACC) complex. Biotin carboxylase (BC) catalyzes the carboxylation of biotin on its carrier protein (BCCP) and then the CO(2) group is transferred by the transcarboxylase to acetyl-CoA to form malonyl-CoA. In Nuphar advena (Common spatterdock), this protein is Acetyl-coenzyme A carboxylase carboxyl transferase subunit beta, chloroplastic.